The following is a 524-amino-acid chain: Phosphoenolpyruvate carboxykinase (ATP) (524 aa).

Positions 52, 188, and 194 each coordinate substrate. ATP is bound by residues lysine 194, histidine 213, and 229 to 237; that span reads GLSGTGKTT. Positions 194 and 213 each coordinate Mn(2+). Residue aspartate 250 participates in Mn(2+) binding. The ATP site is built by glutamate 278, arginine 314, and threonine 439. Substrate is bound at residue arginine 314.

This sequence belongs to the phosphoenolpyruvate carboxykinase (ATP) family. Requires Mn(2+) as cofactor.

It is found in the cytoplasm. The enzyme catalyses oxaloacetate + ATP = phosphoenolpyruvate + ADP + CO2. The protein operates within carbohydrate biosynthesis; gluconeogenesis. Its function is as follows. Involved in the gluconeogenesis. Catalyzes the conversion of oxaloacetate (OAA) to phosphoenolpyruvate (PEP) through direct phosphoryl transfer between the nucleoside triphosphate and OAA. The chain is Phosphoenolpyruvate carboxykinase (ATP) from Campylobacter jejuni subsp. jejuni serotype O:2 (strain ATCC 700819 / NCTC 11168).